A 496-amino-acid chain; its full sequence is Inosine-5'-monophosphate dehydrogenase (496 aa).

CBS domains are found at residues 96–152 (VIKD…TKKV) and 156–212 (MTKD…PQAA). NAD(+)-binding positions include D247 and 299–301 (GIG). Positions 301 and 303 each coordinate K(+). S304 serves as a coordination point for IMP. C306 contributes to the K(+) binding site. The active-site Thioimidate intermediate is C306. IMP contacts are provided by residues 339–341 (DGG), 362–363 (GS), and 386–390 (YRGMG). Catalysis depends on R405, which acts as the Proton acceptor. E423 contributes to the IMP binding site. K(+)-binding residues include E477, S478, and H479.

Belongs to the IMPDH/GMPR family. As to quaternary structure, homotetramer. K(+) serves as cofactor.

The enzyme catalyses IMP + NAD(+) + H2O = XMP + NADH + H(+). The protein operates within purine metabolism; XMP biosynthesis via de novo pathway; XMP from IMP: step 1/1. Its activity is regulated as follows. Mycophenolic acid (MPA) is a non-competitive inhibitor that prevents formation of the closed enzyme conformation by binding to the same site as the amobile flap. In contrast, mizoribine monophosphate (MZP) is a competitive inhibitor that induces the closed conformation. MPA is a potent inhibitor of mammalian IMPDHs but a poor inhibitor of the bacterial enzymes. MZP is a more potent inhibitor of bacterial IMPDH. Functionally, catalyzes the conversion of inosine 5'-phosphate (IMP) to xanthosine 5'-phosphate (XMP), the first committed and rate-limiting step in the de novo synthesis of guanine nucleotides, and therefore plays an important role in the regulation of cell growth. The sequence is that of Inosine-5'-monophosphate dehydrogenase from Methanocaldococcus jannaschii (strain ATCC 43067 / DSM 2661 / JAL-1 / JCM 10045 / NBRC 100440) (Methanococcus jannaschii).